The following is a 360-amino-acid chain: Peptide chain release factor 1 (360 aa).

At glutamine 235 the chain carries N5-methylglutamine.

Belongs to the prokaryotic/mitochondrial release factor family. Methylated by PrmC. Methylation increases the termination efficiency of RF1.

Its subcellular location is the cytoplasm. Peptide chain release factor 1 directs the termination of translation in response to the peptide chain termination codons UAG and UAA. In Methylobacillus flagellatus (strain ATCC 51484 / DSM 6875 / VKM B-1610 / KT), this protein is Peptide chain release factor 1.